The primary structure comprises 785 residues: uncharacterized protein (785 aa).

Positions 293–421 (LVGYFLSEGY…LRLISLRLGF (129 aa)) constitute a DOD-type homing endonuclease domain.

This protein undergoes a protein self splicing that involves a post-translational excision of the intervening region (intein) followed by peptide ligation.

This is an uncharacterized protein from Methanocaldococcus jannaschii (strain ATCC 43067 / DSM 2661 / JAL-1 / JCM 10045 / NBRC 100440) (Methanococcus jannaschii).